Consider the following 442-residue polypeptide: 23S rRNA (uracil(1939)-C(5))-methyltransferase RlmD (442 aa).

Positions 12–70 constitute a TRAM domain; sequence SKQLSAKVTLEVTKLDHLGAGMAQHQGKIVFIPGALPNEKVTVQLTEQKKRHARAKLLK. Residues Cys-83, Cys-89, Cys-92, and Cys-171 each coordinate [4Fe-4S] cluster. S-adenosyl-L-methionine contacts are provided by Gln-276, Phe-305, Asn-310, Glu-326, Asp-353, and Asp-373. Cys-399 acts as the Nucleophile in catalysis.

The protein belongs to the class I-like SAM-binding methyltransferase superfamily. RNA M5U methyltransferase family. RlmD subfamily.

It carries out the reaction uridine(1939) in 23S rRNA + S-adenosyl-L-methionine = 5-methyluridine(1939) in 23S rRNA + S-adenosyl-L-homocysteine + H(+). Its function is as follows. Catalyzes the formation of 5-methyl-uridine at position 1939 (m5U1939) in 23S rRNA. The sequence is that of 23S rRNA (uracil(1939)-C(5))-methyltransferase RlmD from Shewanella sediminis (strain HAW-EB3).